The primary structure comprises 280 residues: Manganese transport system membrane protein MntC (280 aa).

A run of 9 helical transmembrane segments spans residues 16–36 (ALIT…FIIL), 41–61 (LMGD…YMMG), 62–82 (MNFF…IGFV), 92–112 (TAIG…ISFA), 137–157 (TIII…EFLV), 168–188 (YGLN…LVTV), 193–213 (TVGI…AYLL), 221–241 (IVLA…FSYI), and 244–264 (LASG…AFLF).

The protein belongs to the ABC-3 integral membrane protein family.

Its subcellular location is the cell membrane. This protein is probably a component of a manganese permease, a binding protein-dependent, ATP-driven transport system. The sequence is that of Manganese transport system membrane protein MntC (mntC) from Listeria monocytogenes serovar 1/2a (strain ATCC BAA-679 / EGD-e).